We begin with the raw amino-acid sequence, 281 residues long: uncharacterized protein (281 aa).

Positions Met1–Ile30 are disordered. A compositionally biased stretch (pro residues) spans Pro20 to Ile30. 7 helical membrane passes run Thr58–Trp78, Thr88–Leu107, Met117–Phe137, Ala145–Trp165, Leu171–Gln191, Tyr196–Ile216, and Val248–Ala268.

This sequence belongs to the cytomegalovirus US12 family.

The protein resides in the host membrane. This is an uncharacterized protein from Homo sapiens (Human).